A 147-amino-acid chain; its full sequence is Large ribosomal subunit protein uL15 (147 aa).

Positions 1–28 are enriched in basic residues; that stretch reads MIRRRKKVRKLRGSHTHGWGCKKKHRGG. Residues 1 to 43 are disordered; that stretch reads MIRRRKKVRKLRGSHTHGWGCKKKHRGGGSKGGRGMAGTGKRN. The span at 29 to 38 shows a compositional bias: gly residues; sequence GSKGGRGMAG.

This sequence belongs to the universal ribosomal protein uL15 family. Part of the 50S ribosomal subunit.

Its function is as follows. Binds to the 23S rRNA. In Pyrococcus furiosus (strain ATCC 43587 / DSM 3638 / JCM 8422 / Vc1), this protein is Large ribosomal subunit protein uL15.